Reading from the N-terminus, the 68-residue chain is Serine rich endogenous peptide 13 (68 aa).

The first 31 residues, 1-31 (MATKASNLVVFLLSLLLLFLLISFQVGVADA), serve as a signal peptide directing secretion. A disordered region spans residues 33–68 (RNKRQGQEQRVDYDYPRPPTAPIYLPPSKSRKGKGP). Residues 37 to 47 (QGQEQRVDYDY) are compositionally biased toward basic and acidic residues. Residues 48 to 57 (PRPPTAPIYL) are compositionally biased toward pro residues. The short motif at 54–68 (PIYLPPSKSRKGKGP) is the SCOOP motif element. The SxS motif essential for MIK2 binding motif lies at 60–62 (SKS).

The protein belongs to the serine rich endogenous peptide (SCOOP) phytocytokine family. In terms of assembly, interacts with MIK2 (via extracellular leucine-rich repeat domain); this interaction triggers the formation of complex between MIK2 and the BAK1/SERK3 and SERK4 coreceptors, and subsequent BAK1 activation by phosphorylation. As to expression, mostly expressed in stems and flowers and, to a lower extent, in seedlings shoots, roots, siliques, seeds and leaves.

The protein resides in the cell membrane. The protein localises to the secreted. It localises to the extracellular space. Its subcellular location is the apoplast. Its function is as follows. Brassicaceae-specific phytocytokine (plant endogenous peptide released into the apoplast) perceived by MIK2 in a BAK1/SERK3 and SERK4 coreceptors-dependent manner, that modulates various physiological and antimicrobial processes including growth prevention and reactive oxygen species (ROS) response regulation. Promotes the expression of immune-related marker genes (e.g. WRKY30, WRKY33 and CYP81F2) in a MIK2-dependent manner. Inhibits root growth and regulates root meristems. Prevents general growth and development. Exhibits antibacterial effects against Pseudomonas syringae pv. tomato DC3000, Ralstonia solanacearum, Bacillus subtilis and Agrobacterium tumefaciens, thus being an antimicrobial peptide (AMP). The polypeptide is Serine rich endogenous peptide 13 (Arabidopsis thaliana (Mouse-ear cress)).